Consider the following 238-residue polypeptide: Ribonuclease HII (238 aa).

Residues Gln23–Met215 enclose the RNase H type-2 domain. A divalent metal cation is bound by residues Asp29, Glu30, and Asp124.

This sequence belongs to the RNase HII family. Mn(2+) is required as a cofactor. Mg(2+) serves as cofactor.

It localises to the cytoplasm. The enzyme catalyses Endonucleolytic cleavage to 5'-phosphomonoester.. In terms of biological role, endonuclease that specifically degrades the RNA of RNA-DNA hybrids. In Cupriavidus necator (strain ATCC 17699 / DSM 428 / KCTC 22496 / NCIMB 10442 / H16 / Stanier 337) (Ralstonia eutropha), this protein is Ribonuclease HII.